Reading from the N-terminus, the 301-residue chain is Mitochondrial substrate carrier family protein X (301 aa).

Topologically, residues 1 to 23 (MVQQQQQQQQIKKNQVKPPLYSN) are mitochondrial intermembrane. Solcar repeat units follow at residues 18–109 (PPLY…FRTR), 117–199 (IKLW…MKHN), and 208–296 (IGLP…QKSF). Residues 24-44 (LIAGAIAGVIGSSVVFPLDFV) form a helical membrane-spanning segment. The Mitochondrial matrix segment spans residues 45-75 (KTRLQQQRVSIDGSKQYNGIIDCFKKVIKNE). A helical transmembrane segment spans residues 76–97 (GGVRGLYRGLSSNLIGIIPEKA). Over 98 to 122 (LKLAMNDYFRTRFQGDRSYIKLWEE) the chain is Mitochondrial intermembrane. A helical transmembrane segment spans residues 123 to 143 (VASGGLAGMCQVVATNPMELV). Residues 144 to 173 (KIRMQVSGLSGKKASLKEVVSELGIKGLYK) lie on the Mitochondrial matrix side of the membrane. Residues 174-194 (GTASTLLRDVPFSMIYFSIYG) traverse the membrane as a helical segment. The Mitochondrial intermembrane segment spans residues 195–207 (RMKHNLTDQETGE). The chain crosses the membrane as a helical span at residues 208-228 (IGLPKILLCGITAGSIAASVS). The Mitochondrial matrix segment spans residues 229 to 271 (TPFDVIKTRIQVKPGPNDPHYKGIADCFRKTIQSEGPKALFKG). A helical transmembrane segment spans residues 272–292 (VLPRVCIISPLFGITLVVYEI). Topologically, residues 293 to 301 (QKSFYASTH) are mitochondrial intermembrane.

It belongs to the mitochondrial carrier (TC 2.A.29) family.

It is found in the mitochondrion inner membrane. Mitochondrial solute carriers shuttle metabolites, nucleotides, and cofactors through the mitochondrial inner membrane. This chain is Mitochondrial substrate carrier family protein X (mcfX), found in Dictyostelium discoideum (Social amoeba).